Reading from the N-terminus, the 1114-residue chain is TBC1 domain family member 8B (1114 aa).

2 consecutive GRAM domains span residues 145–212 (LKFE…EKTS) and 285–353 (EQFK…DKTD). Positions 399–411 (TEVAVSSDSTGPS) are enriched in polar residues. The interval 399-420 (TEVAVSSDSTGPSENFEEQPLT) is disordered. A Rab-GAP TBC domain is found at 486–673 (GIPETLRGEL…NVVDCFFYDG (188 aa)). Positions 857–892 (NRDSLALWTFRLLDENSDCLINFKEFSSAIDIMYNG) constitute an EF-hand domain. 2 disordered regions span residues 938–957 (SKPA…EKGK) and 1032–1061 (LHSP…KDLP). Positions 940 to 957 (PADEKETESGRNSPEKGK) are enriched in basic and acidic residues.

Interacts (via domain Rab-GAP TBC) with RAB11B (in GTP-bound form).

It is found in the cytoplasm. The protein resides in the cytosol. In terms of biological role, involved in vesicular recycling, probably as a RAB11B GTPase-activating protein. This chain is TBC1 domain family member 8B (Tbc1d8b), found in Mus musculus (Mouse).